A 629-amino-acid chain; its full sequence is Tudor and KH domain-containing protein homolog (629 aa).

The chain crosses the membrane as a helical span at residues 9-29 (LPIALGLSLVTVTAFVAYYVL). KH domains follow at residues 46–109 (INTI…ETLI) and 119–185 (IMSE…KKLV). Residues 198 to 240 (IEQSKRPPRHSSSPPSPCPSPGDRDADADAQGDVDHTRVKYKR) are disordered. Positions 219-240 (GDRDADADAQGDVDHTRVKYKR) are enriched in basic and acidic residues. Residues 297-362 (HVSVGQVVAA…CELRADLLRL (66 aa)) enclose the Tudor domain. The tract at residues 464-526 (PAPSPRPSPP…GDDSKDKDGI (63 aa)) is disordered.

The protein belongs to the Tdrkh family. As to quaternary structure, interacts with (symmetrically methylated) Siwi. Interacts with (symmetrically methylated) Ago3. Interacts with PNLDC1/trimmer; interaction takes place on the mitochondrial surface and recruits PNLDC1/trimmer to Siwi-bound pre-piRNAs.

It localises to the mitochondrion outer membrane. Its function is as follows. Participates in the primary piRNA biogenesis pathway and is required during spermatogenesis to repress transposable elements and prevent their mobilization, which is essential for the germline integrity. The piRNA metabolic process mediates the repression of transposable elements during meiosis by forming complexes composed of piRNAs and Piwi proteins (Siwi or Ago3) and govern the methylation and subsequent repression of transposons. Required for the final steps of primary piRNA biogenesis by participating in the processing of 31-37 nt intermediates into mature piRNAs: acts by recruiting the exonuclease PNLDC1/trimmer to Siwi-bound pre-piRNAs. In Bombyx mori (Silk moth), this protein is Tudor and KH domain-containing protein homolog.